The sequence spans 591 residues: MESTLKDIRDGASVLDLDPKATVGGGVEDLYGEDFATEDQLVTPWTVSVASGYSLLRDPRHNKGLAFNDKERDAHYLCGLLPPVVSTQELQERKLMNSIRQYQVPLQKYMAMMDLQERNERLFYKLLIDNVEELLPVVYTPTVGEACQKYGSIFRRPQGLYISLKEKGKILEVLKNWPERRIQVIVVTDGERILGLGDLGCQGMGIPVGKLSLYTALGGVRPSACLPITIDVGTNNEKLLANEFYIGLKQRRATGKEYSEFLQEFMSPVKQNYGEKVLIQFEDFANHNAFDLLAKYGTTHLAFNDDIQGTASVVLAGIVSALRLLGGTLADHKFLFLGAGEAGTGIAELIALEMSKQTKCPIEETRKKIWLVDSKGLIVGSRKDSLQQFKKPWAHEHEPVKDLLDAVKVIKPTVLIGSSGVGKAFTKEVIEAMASCNEKPLILALSNPTSQSECTAEEAYTWTQGRAIFASGSPFDPVEYNGKTFVPGQANNAYIFPGLGMGLVISGAIRVHDEMLLAASEALARQVTQENFDKGLIYPPFSNIRKISAHIAANVAAKAYELGLATRLPQPENLVKYAESCMYSPVYRSYR.

Tyr139 functions as the Proton donor in the catalytic mechanism. NAD(+) is bound at residue Arg192. The active-site Proton acceptor is Lys210. Glu282, Asp283, and Asp306 together coordinate a divalent metal cation. Asp306 is an NAD(+) binding site. 335 to 351 is an NADP(+) binding site; the sequence is LFLGAGEAGTGIAELIA. Asn447 contacts NAD(+).

Belongs to the malic enzymes family. In terms of assembly, homotetramer. The cofactor is Mg(2+). Requires Mn(2+) as cofactor.

It is found in the cytoplasm. It catalyses the reaction (S)-malate + NADP(+) = pyruvate + CO2 + NADPH. It carries out the reaction oxaloacetate + H(+) = pyruvate + CO2. In Vitis vinifera (Grape), this protein is NADP-dependent malic enzyme.